The sequence spans 240 residues: Serine protease SplB (240 aa).

An N-terminal signal peptide occupies residues 1-36 (MNKNVVIKSLATLTILTSVAGIGTTLVEEVQQTAKA). Active-site charge relay system residues include H75, D113, and S193.

It belongs to the peptidase S1B family.

Its subcellular location is the secreted. Serine protease that cleaves specifically after the sequence Trp-Glu-Leu-Gln. The protein is Serine protease SplB (splB) of Staphylococcus aureus (strain bovine RF122 / ET3-1).